The sequence spans 726 residues: Probable pre-mRNA-splicing factor ATP-dependent RNA helicase DEAH2 (726 aa).

The region spanning 71-240 (LKTLNNNQTL…FSGAPLMKVP (170 aa)) is the Helicase ATP-binding domain. Residue 84 to 91 (GETGSGKT) participates in ATP binding. The DEAH box motif lies at 187–190 (DEAH). The Helicase C-terminal domain occupies 265–445 (TVVQIHMCEP…NTVLTLKKLG (181 aa)).

Belongs to the DEAD box helicase family. DEAH subfamily. PRP43 sub-subfamily.

The enzyme catalyses ATP + H2O = ADP + phosphate + H(+). May be involved in pre-mRNA splicing. This chain is Probable pre-mRNA-splicing factor ATP-dependent RNA helicase DEAH2, found in Arabidopsis thaliana (Mouse-ear cress).